A 476-amino-acid chain; its full sequence is Bifunctional protein HldE (476 aa).

The ribokinase stretch occupies residues 1–318 (MLSKKPNILV…EYESSLHKSN (318 aa)). 195 to 198 (NKKE) is an ATP binding site. Asp263 is a catalytic residue. Residues 345 to 476 (FTNGCFDILH…RIQENEKCNN (132 aa)) form a cytidylyltransferase region.

In the N-terminal section; belongs to the carbohydrate kinase PfkB family. The protein in the C-terminal section; belongs to the cytidylyltransferase family. Homodimer.

The enzyme catalyses D-glycero-beta-D-manno-heptose 7-phosphate + ATP = D-glycero-beta-D-manno-heptose 1,7-bisphosphate + ADP + H(+). The catalysed reaction is D-glycero-beta-D-manno-heptose 1-phosphate + ATP + H(+) = ADP-D-glycero-beta-D-manno-heptose + diphosphate. Its pathway is nucleotide-sugar biosynthesis; ADP-L-glycero-beta-D-manno-heptose biosynthesis; ADP-L-glycero-beta-D-manno-heptose from D-glycero-beta-D-manno-heptose 7-phosphate: step 1/4. It participates in nucleotide-sugar biosynthesis; ADP-L-glycero-beta-D-manno-heptose biosynthesis; ADP-L-glycero-beta-D-manno-heptose from D-glycero-beta-D-manno-heptose 7-phosphate: step 3/4. In terms of biological role, catalyzes the phosphorylation of D-glycero-D-manno-heptose 7-phosphate at the C-1 position to selectively form D-glycero-beta-D-manno-heptose-1,7-bisphosphate. Functionally, catalyzes the ADP transfer from ATP to D-glycero-beta-D-manno-heptose 1-phosphate, yielding ADP-D-glycero-beta-D-manno-heptose. The polypeptide is Bifunctional protein HldE (Aliarcobacter butzleri (strain RM4018) (Arcobacter butzleri)).